Consider the following 172-residue polypeptide: Macro domain-containing protein CT2219 (172 aa).

Residues 1 to 172 form the Macro domain; that stretch reads MPDNVLIHAI…DVYQKALAAG (172 aa).

It belongs to the MacroD-type family.

This Chlorobaculum tepidum (strain ATCC 49652 / DSM 12025 / NBRC 103806 / TLS) (Chlorobium tepidum) protein is Macro domain-containing protein CT2219.